The primary structure comprises 435 residues: NADH-quinone oxidoreductase subunit D (435 aa).

The protein belongs to the complex I 49 kDa subunit family. As to quaternary structure, NDH-1 is composed of 14 different subunits. Subunits NuoB, C, D, E, F, and G constitute the peripheral sector of the complex.

It is found in the cell inner membrane. It catalyses the reaction a quinone + NADH + 5 H(+)(in) = a quinol + NAD(+) + 4 H(+)(out). Functionally, NDH-1 shuttles electrons from NADH, via FMN and iron-sulfur (Fe-S) centers, to quinones in the respiratory chain. The immediate electron acceptor for the enzyme in this species is believed to be ubiquinone. Couples the redox reaction to proton translocation (for every two electrons transferred, four hydrogen ions are translocated across the cytoplasmic membrane), and thus conserves the redox energy in a proton gradient. The protein is NADH-quinone oxidoreductase subunit D of Xylella fastidiosa (strain M12).